The following is a 503-amino-acid chain: MEFSVKSGSPEKQRSACIVVGVFEPRRLSPIAEQLDKISDGYISALLRRGELEGKPGQTLLLHHVPNVLSERILLIGCGKERELDERQYKQVIQKTINTLNDTGSMEAVCFLTELHVKGRNNYWKVRQAVETAKETLYSFDQLKTNKSEPRRPLRKMVFNVPTRRELTSGERAIQHGLAIAAGIKAAKDLGNMPPNICNAAYLASQARQLADSYSKNVITRVIGEQQMKELGMHSYLAVGHGSQNESLMSVIEYKGNPSEDARPVVLVGKGLTFDSGGISIKPAEGMDEMKYDMCGAAAVYGVMRMVAELQLPINVIGVLAGCENMPGGRAYRPGDVLTTMSGQTVEVLNTDAEGRLVLCDVLTYVERFEPEAVIDVATLTGACVIALGHHITGLMSNHNPLAHELISASEQAGDRAWRLPLGDEFQEQLESNFADIANIGGRPGGAITAGCFLSRFTRKYNWAHLDIAGTAWRSGKAKGATGRPVALLSQFLLNRAGFNGEE.

The Mn(2+) site is built by K270 and D275. K282 is an active-site residue. Positions 293, 352, and 354 each coordinate Mn(2+). R356 is a catalytic residue.

It belongs to the peptidase M17 family. The cofactor is Mn(2+).

The protein localises to the cytoplasm. It carries out the reaction Release of an N-terminal amino acid, Xaa-|-Yaa-, in which Xaa is preferably Leu, but may be other amino acids including Pro although not Arg or Lys, and Yaa may be Pro. Amino acid amides and methyl esters are also readily hydrolyzed, but rates on arylamides are exceedingly low.. It catalyses the reaction Release of an N-terminal amino acid, preferentially leucine, but not glutamic or aspartic acids.. Its function is as follows. Presumably involved in the processing and regular turnover of intracellular proteins. Catalyzes the removal of unsubstituted N-terminal amino acids from various peptides. The protein is Probable cytosol aminopeptidase of Citrobacter koseri (strain ATCC BAA-895 / CDC 4225-83 / SGSC4696).